Consider the following 960-residue polypeptide: Vacuolar membrane protease (960 aa).

The Cytoplasmic portion of the chain corresponds to 1–57; it reads MADNNSSSGSLVIDEQDYDVHEAGQQGQQGQQKHQQRQQERPSLITRVFRSVFGYRK. The disordered stretch occupies residues 22–41; it reads EAGQQGQQGQQKHQQRQQER. A compositionally biased stretch (low complexity) spans 24-33; the sequence is GQQGQQGQQK. Residues 58 to 78 traverse the membrane as a helical segment; that stretch reads TSLSLFVVATIALCVSLSYID. The Vacuolar segment spans residues 79–401; that stretch reads NSVDFISFPT…FTISTSQLFK (323 aa). The N-linked (GlcNAc...) asparagine glycan is linked to N148. Zn(2+)-binding residues include H189 and D201. E235 functions as the Proton acceptor in the catalytic mechanism. Zn(2+) is bound by residues E236, E261, and H333. A helical membrane pass occupies residues 402 to 422; the sequence is INVALLTVFPILNGLLLLYTI. Residues 423 to 432 are Cytoplasmic-facing; it reads RSRKWQVSFS. Residues 433–453 traverse the membrane as a helical segment; it reads SAISIPVALLVTMFIVVYLVV. Topologically, residues 454 to 476 are vacuolar; it reads ESYKSFNQYLPSSRPLLLVATIT. Residues 477–497 traverse the membrane as a helical segment; the sequence is SILLLVFSIILVAFSFFSIIA. The Cytoplasmic segment spans residues 498–502; that stretch reads EENLR. A helical transmembrane segment spans residues 503–523; the sequence is LLAIVELSFAYWVGLAFTTHG. Residues 524–535 are Vacuolar-facing; that stretch reads LSGAESARHSGE. The chain crosses the membrane as a helical span at residues 536–556; that stretch reads FAVSILFTLEAVASFLGLIGW. The Cytoplasmic portion of the chain corresponds to 557 to 635; it reads SLCRNRSHLQ…FGYDWSLQYL (79 aa). The segment covering 587-605 has biased composition (basic and acidic residues); that stretch reads NDHDHEHRHGHEDNEHGEA. A disordered region spans residues 587–614; the sequence is NDHDHEHRHGHEDNEHGEAHVQQQSQSR. The helical transmembrane segment at 636–656 threads the bilayer; the sequence is ITVPLSIFIIYNSGWLVLEGV. N-linked (GlcNAc...) asparagine glycosylation occurs at N657. Residues 657–668 lie on the Vacuolar side of the membrane; that stretch reads NKTLQESAKAET. A helical membrane pass occupies residues 669–689; sequence FVYNLLWIVSVSLVLPLIPFA. At 690–696 the chain is on the cytoplasmic side; it reads GKLNRYM. A helical membrane pass occupies residues 697–717; that stretch reads VFVLIAIGVLGTLLVHVVQPF. Over 718 to 960 the chain is Vacuolar; sequence NEANPLKLRF…LVAYTKQVHV (243 aa). N736, N763, N803, N875, and N921 each carry an N-linked (GlcNAc...) asparagine glycan.

The protein belongs to the peptidase M28 family. It depends on Zn(2+) as a cofactor.

It localises to the vacuole membrane. Its function is as follows. May be involved in vacuolar sorting and osmoregulation. The protein is Vacuolar membrane protease of Lodderomyces elongisporus (strain ATCC 11503 / CBS 2605 / JCM 1781 / NBRC 1676 / NRRL YB-4239) (Yeast).